Consider the following 309-residue polypeptide: Glutaminase (309 aa).

The substrate site is built by S64, N114, E160, N167, Y191, Y243, and V261.

The protein belongs to the glutaminase family. Homotetramer.

The catalysed reaction is L-glutamine + H2O = L-glutamate + NH4(+). The sequence is that of Glutaminase from Methylorubrum extorquens (strain PA1) (Methylobacterium extorquens).